The sequence spans 97 residues: Aspartyl/glutamyl-tRNA(Asn/Gln) amidotransferase subunit C (97 aa).

Belongs to the GatC family. In terms of assembly, heterotrimer of A, B and C subunits.

The enzyme catalyses L-glutamyl-tRNA(Gln) + L-glutamine + ATP + H2O = L-glutaminyl-tRNA(Gln) + L-glutamate + ADP + phosphate + H(+). It carries out the reaction L-aspartyl-tRNA(Asn) + L-glutamine + ATP + H2O = L-asparaginyl-tRNA(Asn) + L-glutamate + ADP + phosphate + 2 H(+). Functionally, allows the formation of correctly charged Asn-tRNA(Asn) or Gln-tRNA(Gln) through the transamidation of misacylated Asp-tRNA(Asn) or Glu-tRNA(Gln) in organisms which lack either or both of asparaginyl-tRNA or glutaminyl-tRNA synthetases. The reaction takes place in the presence of glutamine and ATP through an activated phospho-Asp-tRNA(Asn) or phospho-Glu-tRNA(Gln). The chain is Aspartyl/glutamyl-tRNA(Asn/Gln) amidotransferase subunit C from Prochlorococcus marinus (strain MIT 9313).